Here is a 578-residue protein sequence, read N- to C-terminus: mRNA-decapping enzyme 1B (578 aa).

N-acetylalanine is present on Ala-2. Phosphoserine occurs at positions 144 and 145. Disordered stretches follow at residues 187-222 (AICD…PEPQ) and 246-265 (RTFA…TRPV). A compositionally biased stretch (basic residues) spans 248–257 (FAHHHHHHHQ). 2 positions are modified to phosphoserine: Ser-274 and Ser-335. Thr-380 carries the phosphothreonine modification.

This sequence belongs to the DCP1 family. In terms of assembly, interacts with DCP1A.

It localises to the cytoplasm. Its subcellular location is the nucleus. The enzyme catalyses a 5'-end (N(7)-methyl 5'-triphosphoguanosine)-ribonucleoside in mRNA + H2O = N(7)-methyl-GDP + a 5'-end phospho-ribonucleoside in mRNA + 2 H(+). Its function is as follows. May play a role in the degradation of mRNAs, both in normal mRNA turnover and in nonsense-mediated mRNA decay. May remove the 7-methyl guanine cap structure from mRNA molecules, yielding a 5'-phosphorylated mRNA fragment and 7m-GDP. The polypeptide is mRNA-decapping enzyme 1B (Dcp1b) (Mus musculus (Mouse)).